A 566-amino-acid chain; its full sequence is Urease subunit alpha 2 (566 aa).

Positions 128 to 566 (GGVDTHIHFI…LPMAQRYFLF (439 aa)) constitute a Urease domain. Residues H133, H135, and K216 each coordinate Ni(2+). N6-carboxylysine is present on K216. H218 lines the substrate pocket. Ni(2+) contacts are provided by H245 and H271. H319 functions as the Proton donor in the catalytic mechanism. D359 contributes to the Ni(2+) binding site.

It belongs to the metallo-dependent hydrolases superfamily. Urease alpha subunit family. May form a heterohexamer of 3 UreC (alpha) and 3 UreAB (gamma/beta) subunits. May also form a heterotrimer of UreA (gamma), UreB (beta) and UreC (alpha) subunits. Three heterotrimers associate to form the active enzyme. The cofactor is Ni cation. Carboxylation allows a single lysine to coordinate two nickel ions.

The protein resides in the cytoplasm. It catalyses the reaction urea + 2 H2O + H(+) = hydrogencarbonate + 2 NH4(+). The protein operates within nitrogen metabolism; urea degradation; CO(2) and NH(3) from urea (urease route): step 1/1. The polypeptide is Urease subunit alpha 2 (Pseudomonas syringae pv. syringae (strain B728a)).